Reading from the N-terminus, the 99-residue chain is Complement inhibitor RaCI7 (99 aa).

The first 24 residues, 1–24 (MAALNGLVLLLLTISAMFISECYS), serve as a signal peptide directing secretion. 3 cysteine pairs are disulfide-bonded: C37–C61, C42–C63, and C57–C78.

The protein belongs to the RaCI family. In terms of tissue distribution, expressed in salivary glands.

It is found in the secreted. Its function is as follows. Complement inhibitor. Prevents complement-mediated C5 activation by binding to C5. Binds C5 at a different binding site than the other tick complement inhibitors OmCI and CirpT1, and the drug eculizumab. In Dermacentor andersoni (Rocky mountain wood tick), this protein is Complement inhibitor RaCI7.